A 303-amino-acid polypeptide reads, in one-letter code: D-alanine--D-alanine ligase (303 aa).

One can recognise an ATP-grasp domain in the interval 100-295; it reads KQLLRRHGIL…FPALIARLIE (196 aa). 127 to 180 contributes to the ATP binding site; the sequence is GLGYPLFVKPNTGGSSLCLSRVTQPEGLAPALEAVFAHCGEAIVEPAIPGVEVT. Residues D249, E262, and N264 each contribute to the Mg(2+) site.

It belongs to the D-alanine--D-alanine ligase family. It depends on Mg(2+) as a cofactor. Requires Mn(2+) as cofactor.

The protein localises to the cytoplasm. The catalysed reaction is 2 D-alanine + ATP = D-alanyl-D-alanine + ADP + phosphate + H(+). Its pathway is cell wall biogenesis; peptidoglycan biosynthesis. Cell wall formation. The polypeptide is D-alanine--D-alanine ligase (Nitratidesulfovibrio vulgaris (strain DP4) (Desulfovibrio vulgaris)).